Here is a 597-residue protein sequence, read N- to C-terminus: Protein IQ-DOMAIN 29 (597 aa).

Residues 1-31 are disordered; the sequence is MGKTPSPGKWIKSLLGKKSSKSSLEKGGEKL. IQ domains are found at residues 106–134, 135–153, and 157–183; these read LEEA…GITR, VQAV…ATYS, and GIVK…QKTN. Residues 159–173 are calmodulin-binding; that stretch reads VKVQALVRGKKARSS. The Nuclear localization signal 1 signature appears at 264 to 271; that stretch reads KKRSFQAV. Disordered stretches follow at residues 268 to 379 and 407 to 597; these read FQAV…KKEI and LIPV…EWKR. The segment covering 289-300 has biased composition (low complexity); sequence STTANSSTSRST. Basic and acidic residues predominate over residues 319-329; it reads ELSKIENDKSK. Residues 356-363 carry the Nuclear localization signal 2 motif; the sequence is HKKASLSN. Residues 414-463 are compositionally biased toward basic and acidic residues; it reads KESDLDKDEKSLVLDKPEQDELRTAERDDKAEEELKTAERDDSAEEKIQE. Positions 467–480 are enriched in polar residues; sequence QISSENGNVASENT. Residues 481 to 500 are compositionally biased toward basic and acidic residues; the sequence is KPSDRRASLPAKIENHHQDD. Residues 572–584 are compositionally biased toward polar residues; the sequence is GSMNSDRSFSSSK. Basic and acidic residues predominate over residues 585-597; sequence DIGDKSTKAEWKR.

Belongs to the IQD family. As to quaternary structure, binds to multiple calmodulin (CaM) in the presence of Ca(2+) and CaM-like proteins.

Its subcellular location is the nucleus. It is found in the nucleus envelope. It localises to the cytoplasm. The protein localises to the cytoskeleton. The protein resides in the cell membrane. May be involved in cooperative interactions with calmodulins or calmodulin-like proteins. Recruits calmodulin proteins to microtubules, thus being a potential scaffold in cellular signaling and trafficking. May associate with nucleic acids and regulate gene expression at the transcriptional or post-transcriptional level. The polypeptide is Protein IQ-DOMAIN 29 (Arabidopsis thaliana (Mouse-ear cress)).